The sequence spans 163 residues: Large ribosomal subunit protein uL10 (163 aa).

It belongs to the universal ribosomal protein uL10 family. As to quaternary structure, part of the ribosomal stalk of the 50S ribosomal subunit. The N-terminus interacts with L11 and the large rRNA to form the base of the stalk. The C-terminus forms an elongated spine to which L12 dimers bind in a sequential fashion forming a multimeric L10(L12)X complex.

Functionally, forms part of the ribosomal stalk, playing a central role in the interaction of the ribosome with GTP-bound translation factors. The chain is Large ribosomal subunit protein uL10 from Haemophilus ducreyi (strain 35000HP / ATCC 700724).